The sequence spans 364 residues: Chorismate synthase (364 aa).

Arginine 48 contacts NADP(+). FMN is bound by residues 131–133 (RAS), 243–244 (NA), glycine 288, 303–307 (KPTSS), and arginine 329.

This sequence belongs to the chorismate synthase family. Homotetramer. It depends on FMNH2 as a cofactor.

It catalyses the reaction 5-O-(1-carboxyvinyl)-3-phosphoshikimate = chorismate + phosphate. The protein operates within metabolic intermediate biosynthesis; chorismate biosynthesis; chorismate from D-erythrose 4-phosphate and phosphoenolpyruvate: step 7/7. Functionally, catalyzes the anti-1,4-elimination of the C-3 phosphate and the C-6 proR hydrogen from 5-enolpyruvylshikimate-3-phosphate (EPSP) to yield chorismate, which is the branch point compound that serves as the starting substrate for the three terminal pathways of aromatic amino acid biosynthesis. This reaction introduces a second double bond into the aromatic ring system. In Bartonella bacilliformis (strain ATCC 35685 / KC583 / Herrer 020/F12,63), this protein is Chorismate synthase.